The chain runs to 517 residues: Putative succinate-semialdehyde dehydrogenase [NADP(+)] (517 aa).

Residues 157–158 (WN), 181–184 (KPDS), and 232–233 (GS) contribute to the NADP(+) site. The Proton acceptor role is filled by Glu-254. Leu-255 contacts NADP(+). Cys-288 acts as the Nucleophile in catalysis. Residue Glu-386 coordinates NADP(+).

Belongs to the aldehyde dehydrogenase family.

The enzyme catalyses succinate semialdehyde + NADP(+) + H2O = succinate + NADPH + 2 H(+). Catalyzes the NADP(+)-dependent oxidation of succinate semialdehyde to succinate. Although it has succinate semialdehyde dehydrogenase activity, is likely to act physiologically on a different aldehyde(s). In Mycolicibacterium smegmatis (strain ATCC 700084 / mc(2)155) (Mycobacterium smegmatis), this protein is Putative succinate-semialdehyde dehydrogenase [NADP(+)] (gabD2).